Reading from the N-terminus, the 387-residue chain is MKTVSVFGSTGAIGQMIIDIIFSELDKYQVKVLVAKSNIQLLAFQAKLVNAERVVITDVNLYRELKDLLLDTNIKVSAGDDGMIMATSLDVDYAMMAIVGIAALVPMTYLINSNVKVIALANKESIVCGGALLLSLAKEKDVKIIPLDSEHNAIYQILADKGHKDLEKITLTASGGPLLSMDYEQMKYVTVQDTVKHPVWKMGKKISVDSATMINKSLEIIEAYYLFSIKAEKLDVIIHNESVVHGIISYIDGTSIAFMSVPDMKIPIMYSLSWPNRSAALCKKLNLALYNQLTFMKPDIYKFPGIKLGFEVLKTSNVHANGIILNAANEIAVNAFLAKKIGFLDIVNIVYETLNLVNYGRINSLSNILDCDAISRKVASSTIDKLC.

Residues Thr10, Gly11, Ile13, Asn38, and Asn122 each contribute to the NADPH site. Residue Lys123 coordinates 1-deoxy-D-xylulose 5-phosphate. Glu124 provides a ligand contact to NADPH. Asp148 is a Mn(2+) binding site. Residues Ser149, Glu150, Ser174, and His197 each contribute to the 1-deoxy-D-xylulose 5-phosphate site. Glu150 lines the Mn(2+) pocket. Gly203 lines the NADPH pocket. 4 residues coordinate 1-deoxy-D-xylulose 5-phosphate: Ser210, Asn215, Lys216, and Glu219. Glu219 contributes to the Mn(2+) binding site.

The protein belongs to the DXR family. It depends on Mg(2+) as a cofactor. Mn(2+) is required as a cofactor.

It catalyses the reaction 2-C-methyl-D-erythritol 4-phosphate + NADP(+) = 1-deoxy-D-xylulose 5-phosphate + NADPH + H(+). It functions in the pathway isoprenoid biosynthesis; isopentenyl diphosphate biosynthesis via DXP pathway; isopentenyl diphosphate from 1-deoxy-D-xylulose 5-phosphate: step 1/6. Catalyzes the NADPH-dependent rearrangement and reduction of 1-deoxy-D-xylulose-5-phosphate (DXP) to 2-C-methyl-D-erythritol 4-phosphate (MEP). This chain is 1-deoxy-D-xylulose 5-phosphate reductoisomerase, found in Ehrlichia canis (strain Jake).